The primary structure comprises 104 residues: Large ribosomal subunit protein bL21 (104 aa).

This sequence belongs to the bacterial ribosomal protein bL21 family. As to quaternary structure, part of the 50S ribosomal subunit. Contacts protein L20.

This protein binds to 23S rRNA in the presence of protein L20. The polypeptide is Large ribosomal subunit protein bL21 (Francisella tularensis subsp. holarctica (strain FTNF002-00 / FTA)).